A 258-amino-acid chain; its full sequence is Small ribosomal subunit protein uS2 (258 aa).

The protein belongs to the universal ribosomal protein uS2 family.

The chain is Small ribosomal subunit protein uS2 from Leuconostoc citreum (strain KM20).